The primary structure comprises 586 residues: Dual specificity tyrosine-phosphorylation-regulated kinase 3 (586 aa).

A compositionally biased stretch (basic and acidic residues) spans 1-13; the sequence is MGGAARERGRKDA. The disordered stretch occupies residues 1–187; the sequence is MGGAARERGR…QGVIGGPNNG (187 aa). One can recognise a Protein kinase domain in the interval 208–521; the sequence is YEVLKIIGKG…PAQALRHPWI (314 aa). Residues 214–222, Lys-237, and 287–290 contribute to the ATP site; these read IGKGSFGQV and FELL. The Proton acceptor role is filled by Asp-334. Position 368 is a phosphotyrosine (Tyr-368). The short motif at 467-480 is the Nuclear localization signal element; it reads RSRRGKKRGPPGSK.

This sequence belongs to the protein kinase superfamily. CMGC Ser/Thr protein kinase family. MNB/DYRK subfamily. In terms of assembly, interacts with SIRT1. The cofactor is Mg(2+). In terms of processing, protein kinase activity is activated following autophosphorylation at Tyr-368. Post-translationally, ubiquitinated at anaphase by the anaphase-promoting complex (APC/C), leading to its degradation by the proteasome. As to expression, expressed predominantly in testis. Expressed in late pachytene spermatocytes.

It localises to the nucleus. It is found in the cytoplasm. Its subcellular location is the nucleus speckle. The protein localises to the cytoplasmic granule. The protein resides in the cytoskeleton. It localises to the microtubule organizing center. It is found in the centrosome. The catalysed reaction is L-seryl-[protein] + ATP = O-phospho-L-seryl-[protein] + ADP + H(+). It catalyses the reaction L-threonyl-[protein] + ATP = O-phospho-L-threonyl-[protein] + ADP + H(+). The enzyme catalyses L-tyrosyl-[protein] + ATP = O-phospho-L-tyrosyl-[protein] + ADP + H(+). Protein kinase activity is activated following autophosphorylation at Tyr-368. Functionally, dual-specificity protein kinase that promotes disassembly of several types of membraneless organelles during mitosis, such as stress granules, nuclear speckles and pericentriolar material. Dual-specificity tyrosine-regulated kinases (DYRKs) autophosphorylate a critical tyrosine residue in their activation loop and phosphorylate their substrate on serine and threonine residues. Acts as a central dissolvase of membraneless organelles during the G2-to-M transition, after the nuclear-envelope breakdown: acts by mediating phosphorylation of multiple serine and threonine residues in unstructured domains of proteins, such as SRRM1 and PCM1. Does not mediate disassembly of all membraneless organelles: disassembly of P-body and nucleolus is not regulated by DYRK3. Dissolution of membraneless organelles at the onset of mitosis is also required to release mitotic regulators, such as ZNF207, from liquid-unmixed organelles where they are sequestered and keep them dissolved during mitosis. Regulates mTORC1 by mediating the dissolution of stress granules: during stressful conditions, DYRK3 partitions from the cytosol to the stress granule, together with mTORC1 components, which prevents mTORC1 signaling. When stress signals are gone, the kinase activity of DYRK3 is required for the dissolution of stress granule and mTORC1 relocation to the cytosol: acts by mediating the phosphorylation of the mTORC1 inhibitor AKT1S1, allowing full reactivation of mTORC1 signaling. Also acts as a negative regulator of EPO-dependent erythropoiesis: may place an upper limit on red cell production during stress erythropoiesis. Inhibits cell death due to cytokine withdrawal in hematopoietic progenitor cells. Promotes cell survival upon genotoxic stress through phosphorylation of SIRT1: this in turn inhibits p53/TP53 activity and apoptosis. This is Dual specificity tyrosine-phosphorylation-regulated kinase 3 from Rattus norvegicus (Rat).